Reading from the N-terminus, the 390-residue chain is ATP-sensitive inward rectifier potassium channel 11 (390 aa).

Residues 1-65 (MLSRKGIIPE…LQDVFTTLVD (65 aa)) are Cytoplasmic-facing. 2 residues coordinate ATP: Asn-48 and Arg-50. Residues 66 to 92 (LKWTHTLLIFTMSFLCSWLLFAMVWWL) traverse the membrane as a helical segment. Residues 93–116 (IAFAHGDLAPGEGAAVPCVTSIHS) lie on the Extracellular side of the membrane. Cys-110 and Cys-142 are joined by a disulfide. The segment at residues 117–133 (FSSAFLFSIEVQVTIGF) is an intramembrane region (discontinuously helical; Pore-forming). Residues Thr-130 and Phe-133 each contribute to the K(+) site. A Selectivity filter motif is present at residues 130 to 135 (TIGFGG). The Extracellular portion of the chain corresponds to 134–142 (GGRMVTEEC). A helical transmembrane segment spans residues 143–171 (PLAILILIVQNIVGLMINAIMLGCIFMKT). Residues 172–390 (AQAHRRAETL…KFSISPDSLS (219 aa)) are Cytoplasmic-facing. Arg-176 lines the a 1,2-diacyl-sn-glycero-3-phospho-(1D-myo-inositol-4,5-bisphosphate) pocket. Tyr-330 contacts ATP. Position 341 is a phosphothreonine; by MAPK1 (Thr-341). Ser-385 is subject to Phosphoserine; by MAPK1.

This sequence belongs to the inward rectifier-type potassium channel (TC 1.A.2.1) family. KCNJ11 subfamily. Homotetramer; the homotetramer binds four ATP molecules (one ATP per subunit). Forms an heterooctamer with ABCC8/SUR1; one KCNJ11 homotetramer interacts with four ABCC8/SUR1 molecules. Interacts with ABCC9/SUR2. Post-translationally, phosphorylation by MAPK1 results in changes in channel gating that destabilize the closed states and reduce the ATP sensitivity.

It localises to the membrane. It catalyses the reaction K(+)(in) = K(+)(out). Its activity is regulated as follows. KATP channels are regulated by cytoplasmic ATP/ADP ratios; ATP inhibits the channel by closing the pore, while ADP activates the channel. Activated by phosphatidylinositol 4,5-biphosphate (PtdIns(4,5)P2). Its function is as follows. Inward rectifier potassium channel that forms the pore of ATP-sensitive potassium channels (KATP), regulating potassium permeability as a function of cytoplasmic ATP and ADP concentrations in many different cells. Inward rectifier potassium channels are characterized by a greater tendency to allow potassium to flow into the cell rather than out of it. Their voltage dependence is regulated by the concentration of extracellular potassium; as external potassium is raised, the voltage range of the channel opening shifts to more positive voltages. The inward rectification is mainly due to the blockage of outward current by internal magnesium. Can be blocked by extracellular barium. In pancreatic cells, it forms KATP channels with ABCC8/SUR1. Can form cardiac and smooth muscle-type KATP channels with ABCC9. This Oryctolagus cuniculus (Rabbit) protein is ATP-sensitive inward rectifier potassium channel 11 (KCNJ11).